We begin with the raw amino-acid sequence, 168 residues long: Large ribosomal subunit protein uL10 (168 aa).

The protein belongs to the universal ribosomal protein uL10 family. As to quaternary structure, part of the ribosomal stalk of the 50S ribosomal subunit. The N-terminus interacts with L11 and the large rRNA to form the base of the stalk. The C-terminus forms an elongated spine to which L12 dimers bind in a sequential fashion forming a multimeric L10(L12)X complex.

Its function is as follows. Forms part of the ribosomal stalk, playing a central role in the interaction of the ribosome with GTP-bound translation factors. This chain is Large ribosomal subunit protein uL10, found in Acinetobacter baumannii (strain AB307-0294).